Consider the following 314-residue polypeptide: Ribosomal protein L11 methyltransferase (314 aa).

S-adenosyl-L-methionine contacts are provided by T163, G184, D206, and N248.

It belongs to the methyltransferase superfamily. PrmA family.

Its subcellular location is the cytoplasm. The enzyme catalyses L-lysyl-[protein] + 3 S-adenosyl-L-methionine = N(6),N(6),N(6)-trimethyl-L-lysyl-[protein] + 3 S-adenosyl-L-homocysteine + 3 H(+). Its function is as follows. Methylates ribosomal protein L11. The polypeptide is Ribosomal protein L11 methyltransferase (Lactobacillus acidophilus (strain ATCC 700396 / NCK56 / N2 / NCFM)).